A 203-amino-acid chain; its full sequence is Transmembrane protein 269 (203 aa).

Transmembrane regions (helical) follow at residues 60-80 (GLAS…LAII), 124-144 (FILC…SYYP), and 157-177 (LVYI…SAFY).

Its subcellular location is the membrane. This Homo sapiens (Human) protein is Transmembrane protein 269.